The following is a 246-amino-acid chain: 23S rRNA (guanosine-2'-O-)-methyltransferase RlmB (246 aa).

S-adenosyl-L-methionine is bound by residues Gly197, Ile217, and Leu226.

The protein belongs to the class IV-like SAM-binding methyltransferase superfamily. RNA methyltransferase TrmH family. RlmB subfamily.

The protein localises to the cytoplasm. The catalysed reaction is guanosine(2251) in 23S rRNA + S-adenosyl-L-methionine = 2'-O-methylguanosine(2251) in 23S rRNA + S-adenosyl-L-homocysteine + H(+). Its function is as follows. Specifically methylates the ribose of guanosine 2251 in 23S rRNA. This Haemophilus influenzae (strain ATCC 51907 / DSM 11121 / KW20 / Rd) protein is 23S rRNA (guanosine-2'-O-)-methyltransferase RlmB.